The sequence spans 54 residues: Protein hunchback (54 aa).

3 consecutive C2H2-type zinc fingers follow at residues 1 to 3, 9 to 31, and 37 to 54; these read RKH, FQCD…RKFH, and YRCA…SFKL.

It belongs to the hunchback C2H2-type zinc-finger protein family.

The protein resides in the nucleus. In terms of biological role, gap class segmentation protein that controls development of head structures. In Calliphora vicina (Blue blowfly), this protein is Protein hunchback (hb).